Reading from the N-terminus, the 178-residue chain is Large ribosomal subunit protein uL6 (178 aa).

Belongs to the universal ribosomal protein uL6 family. As to quaternary structure, part of the 50S ribosomal subunit.

Its function is as follows. This protein binds to the 23S rRNA, and is important in its secondary structure. It is located near the subunit interface in the base of the L7/L12 stalk, and near the tRNA binding site of the peptidyltransferase center. The sequence is that of Large ribosomal subunit protein uL6 from Natranaerobius thermophilus (strain ATCC BAA-1301 / DSM 18059 / JW/NM-WN-LF).